A 382-amino-acid chain; its full sequence is Chaperone protein DnaJ (382 aa).

Residues 6-70 (DYYEILGLPK…EKRAQYDRFG (65 aa)) form the J domain. The segment at 131 to 213 (GVRKDIDIPR…CGGAGRVRNK (83 aa)) adopts a CR-type zinc-finger fold. Positions 144, 147, 161, 164, 187, 190, 201, and 204 each coordinate Zn(2+). 4 CXXCXGXG motif repeats span residues 144–151 (CSTCSGTG), 161–168 (CPTCGGTG), 187–194 (CSTCHGRG), and 201–208 (CPVCGGAG). Residues 146 to 168 (TCSGTGAKPGTSPKRCPTCGGTG) form a disordered region. Residues 348–382 (FENLSKGKKPQEEEKSKAEKHKKGIFEKVKDAFES) form a disordered region. Over residues 371 to 382 (GIFEKVKDAFES) the composition is skewed to basic and acidic residues.

Belongs to the DnaJ family. Homodimer. The cofactor is Zn(2+).

It localises to the cytoplasm. Functionally, participates actively in the response to hyperosmotic and heat shock by preventing the aggregation of stress-denatured proteins and by disaggregating proteins, also in an autonomous, DnaK-independent fashion. Unfolded proteins bind initially to DnaJ; upon interaction with the DnaJ-bound protein, DnaK hydrolyzes its bound ATP, resulting in the formation of a stable complex. GrpE releases ADP from DnaK; ATP binding to DnaK triggers the release of the substrate protein, thus completing the reaction cycle. Several rounds of ATP-dependent interactions between DnaJ, DnaK and GrpE are required for fully efficient folding. Also involved, together with DnaK and GrpE, in the DNA replication of plasmids through activation of initiation proteins. In Methanosarcina acetivorans (strain ATCC 35395 / DSM 2834 / JCM 12185 / C2A), this protein is Chaperone protein DnaJ.